The chain runs to 281 residues: Cytochrome bc1 complex cytochrome c subunit (281 aa).

A helical membrane pass occupies residues 17 to 37 (AAGAMALAVGLTGAGILVNAV). 2 consecutive Cytochrome c domains span residues 52 to 132 (ALIQ…EANG) and 162 to 240 (ADVA…KSAK). Positions 65, 68, 69, 175, 178, and 179 each coordinate heme c. The chain crosses the membrane as a helical span at residues 259–279 (GMMMWLVGIVVLVAAAMWIGS).

In terms of assembly, the cytochrome bc1 complex is composed of a cytochrome b (QcrB), the Rieske iron-sulfur protein (QcrA) and a diheme cytochrome c (QcrC) subunit. The bc1 complex forms a supercomplex with cytochrome c oxidase (cytochrome aa3). Post-translationally, binds 2 heme c groups covalently per subunit.

The protein resides in the cell membrane. It carries out the reaction a quinol + 2 Fe(III)-[cytochrome c](out) = a quinone + 2 Fe(II)-[cytochrome c](out) + 2 H(+)(out). In terms of biological role, cytochrome c1 subunit of the cytochrome bc1 complex, an essential component of the respiratory electron transport chain required for ATP synthesis. The bc1 complex catalyzes the oxidation of menaquinol and the reduction of cytochrome c in the respiratory chain. The bc1 complex operates through a Q-cycle mechanism that couples electron transfer to generation of the proton gradient that drives ATP synthesis. This chain is Cytochrome bc1 complex cytochrome c subunit (qcrC), found in Corynebacterium diphtheriae (strain ATCC 700971 / NCTC 13129 / Biotype gravis).